The sequence spans 292 residues: Shikimate dehydrogenase (NADP(+)) (292 aa).

Shikimate is bound by residues 22-24 (SLS) and serine 69. Residue lysine 73 is the Proton acceptor of the active site. The shikimate site is built by asparagine 94 and aspartate 111. Residues 135–139 (GVGGA) and isoleucine 236 contribute to the NADP(+) site. Tyrosine 238 contacts shikimate. An NADP(+)-binding site is contributed by glycine 260.

This sequence belongs to the shikimate dehydrogenase family. As to quaternary structure, homodimer.

It carries out the reaction shikimate + NADP(+) = 3-dehydroshikimate + NADPH + H(+). The protein operates within metabolic intermediate biosynthesis; chorismate biosynthesis; chorismate from D-erythrose 4-phosphate and phosphoenolpyruvate: step 4/7. In terms of biological role, involved in the biosynthesis of the chorismate, which leads to the biosynthesis of aromatic amino acids. Catalyzes the reversible NADPH linked reduction of 3-dehydroshikimate (DHSA) to yield shikimate (SA). The sequence is that of Shikimate dehydrogenase (NADP(+)) from Streptococcus pyogenes serotype M2 (strain MGAS10270).